The sequence spans 128 residues: Aspartate 1-decarboxylase (128 aa).

Residue Ser25 is the Schiff-base intermediate with substrate; via pyruvic acid of the active site. Ser25 carries the post-translational modification Pyruvic acid (Ser). Position 57 (Thr57) interacts with substrate. Tyr58 (proton donor) is an active-site residue. Residue Gly73–Ala75 participates in substrate binding.

Belongs to the PanD family. As to quaternary structure, heterooctamer of four alpha and four beta subunits. Pyruvate serves as cofactor. In terms of processing, is synthesized initially as an inactive proenzyme, which is activated by self-cleavage at a specific serine bond to produce a beta-subunit with a hydroxyl group at its C-terminus and an alpha-subunit with a pyruvoyl group at its N-terminus.

Its subcellular location is the cytoplasm. The enzyme catalyses L-aspartate + H(+) = beta-alanine + CO2. It participates in cofactor biosynthesis; (R)-pantothenate biosynthesis; beta-alanine from L-aspartate: step 1/1. Its function is as follows. Catalyzes the pyruvoyl-dependent decarboxylation of aspartate to produce beta-alanine. This Ruminiclostridium cellulolyticum (strain ATCC 35319 / DSM 5812 / JCM 6584 / H10) (Clostridium cellulolyticum) protein is Aspartate 1-decarboxylase.